The primary structure comprises 314 residues: Protein nutcracker (314 aa).

The interval 1–62 (MSDTKSEIEG…PRLIQEKSTQ (62 aa)) is disordered. Positions 21–34 (QQQQQPQQQQNEQQ) are enriched in low complexity. The interval 257 to 314 (MQMEMKLQPSLLGLPDELYFEIFRYLDKSQLNVVARVNRHLHFYSKEVERKRLKGGRS) is required for interaction with skpA and Cul1, but not with PI31. One can recognise an F-box domain in the interval 264–309 (QPSLLGLPDELYFEIFRYLDKSQLNVVARVNRHLHFYSKEVERKRL).

As to quaternary structure, component of an SCF (SKP1-CUL1-F-box protein) E3 ubiquitin-protein ligase complex, at least composed of ntc, skpA and Cul1. Interacts (via F-box domain) with skpA and Cul1. Interacts with Prosalpha7 and PI31. Interacts with Bruce. Expressed in testis (at protein level).

The protein resides in the cytoplasm. In terms of biological role, functions together with PI31 to control non-apoptotic caspase activation during sperm individualization. Positively regulates PI31 stability. This is Protein nutcracker from Drosophila melanogaster (Fruit fly).